Reading from the N-terminus, the 660-residue chain is RNA polymerase II-associated protein 3 (660 aa).

Thr2 is modified (N-acetylthreonine). The TPR 1 repeat unit spans residues 8–41 (VELQLQVKHNAEELQDFMRDLEHWEKDMKEKDLE). A disordered region spans residues 42 to 83 (LRRQGGVAEENLPPIRNGNFRKKKKKGKAKESSRKTKEENTK). A compositionally biased stretch (basic residues) spans 60 to 69 (NFRKKKKKGK). Residues 70–83 (AKESSRKTKEENTK) show a composition bias toward basic and acidic residues. Phosphoserine is present on residues Ser88, Ser117, Ser120, and Ser122. The tract at residues 109-128 (EDSTHDSLSQESESDEDGIR) is disordered. 3 TPR repeats span residues 134–167 (ALVL…DPYN), 169–201 (VLPT…SRTY), and 202–235 (TKAY…EPDN). A disordered region spans residues 250–283 (TSKENSGPGAAAAAESKPAAGESKPTGGQQGRQK). Residues 252-273 (KENSGPGAAAAAESKPAAGESK) are compositionally biased toward low complexity. 3 TPR repeats span residues 284-317 (AIAE…DRTN), 319-351 (LLPA…DGSY), and 352-385 (SKAF…EPGN). The disordered stretch occupies residues 449 to 485 (DAPDSSATVPESDRATAAVGTGTKKNPSEGVSLPAGD). Ser476 is modified (phosphoserine). Lys493 participates in a covalent cross-link: Glycyl lysine isopeptide (Lys-Gly) (interchain with G-Cter in SUMO2).

This sequence belongs to the RPAP3 family. Tightly associated with the RNA polymerase II complex. Component of the R2TP complex composed at least of RUVBL1, RUVBL2, RPAP3 and PIHD1. Component of the PAQosome complex which is responsible for the biogenesis of several protein complexes and which consists of R2TP complex members RUVBL1, RUVBL2, RPAP3 and PIH1D1, URI complex members PFDN2, PFDN6, PDRG1, UXT and URI1 as well as ASDURF, POLR2E and DNAAF10/WDR92. Interacts with PIH1D1. Interacts with TSC1 and TSC2. Interacts with PRPF8 and EFTUD2 in a ZNHIT2-dependent manner.

In terms of biological role, forms an interface between the RNA polymerase II enzyme and chaperone/scaffolding protein, suggesting that it is required to connect RNA polymerase II to regulators of protein complex formation. This is RNA polymerase II-associated protein 3 (Rpap3) from Mus musculus (Mouse).